The chain runs to 141 residues: MAKKVVAQVRLVLEAGKATPAPPVGPALGQRGVNLMEFCKKFNAVTADKAGLLIPVIVTVYDDRSFTFITKTPPASFLLKRAAKINSGSSEPKRKVAGKVTRQQIKEIAELKMQDLNANDLEAAMKIIEGTARSMGLEVVD.

Belongs to the universal ribosomal protein uL11 family. In terms of assembly, part of the ribosomal stalk of the 50S ribosomal subunit. Interacts with L10 and the large rRNA to form the base of the stalk. L10 forms an elongated spine to which L12 dimers bind in a sequential fashion forming a multimeric L10(L12)X complex. One or more lysine residues are methylated.

Its function is as follows. Forms part of the ribosomal stalk which helps the ribosome interact with GTP-bound translation factors. The polypeptide is Large ribosomal subunit protein uL11 (Fervidobacterium nodosum (strain ATCC 35602 / DSM 5306 / Rt17-B1)).